Consider the following 841-residue polypeptide: Probable outer membrane usher protein EcpC (841 aa).

Positions 1-29 (MPLRRFSPGLKAQFAFGMVFLFVQPDASA) are cleaved as a signal peptide.

Belongs to the EcpC/MatD family.

In terms of biological role, part of the ecpRABCDE operon, which encodes the E.coli common pilus (ECP). ECP is found in both commensal and pathogenic strains and plays a dual role in early-stage biofilm development and host cell recognition. This Escherichia coli O6:H1 (strain CFT073 / ATCC 700928 / UPEC) protein is Probable outer membrane usher protein EcpC (ecpC).